The sequence spans 58 residues: MFNAYLDTVLDLSANGTVILAKLPEAYAIFDPIVDVMPIIPVFFLLLAFVWQAAVSFR.

The propeptide occupies methionine 1–alanine 21. A helical transmembrane segment spans residues isoleucine 29–phenylalanine 49.

The protein belongs to the PsbK family. PSII is composed of 1 copy each of membrane proteins PsbA, PsbB, PsbC, PsbD, PsbE, PsbF, PsbH, PsbI, PsbJ, PsbK, PsbL, PsbM, PsbT, PsbX, PsbY, PsbZ, Psb30/Ycf12, at least 3 peripheral proteins of the oxygen-evolving complex and a large number of cofactors. It forms dimeric complexes.

It localises to the plastid. The protein resides in the chloroplast thylakoid membrane. Its function is as follows. One of the components of the core complex of photosystem II (PSII). PSII is a light-driven water:plastoquinone oxidoreductase that uses light energy to abstract electrons from H(2)O, generating O(2) and a proton gradient subsequently used for ATP formation. It consists of a core antenna complex that captures photons, and an electron transfer chain that converts photonic excitation into a charge separation. The chain is Photosystem II reaction center protein K from Staurastrum punctulatum (Green alga).